A 641-amino-acid polypeptide reads, in one-letter code: MAIGPKPESIIGSYDHPPQAEAQTEVKSAAINGDTSPVSRLKDFATDPWLTSTDQPQPDSTTNVPYSLPDSTQDARILIVGAGYGGLLFAVRLLQSGFTLEDILLVDSAGGFGGTWYWNRYPGLMCDIESYIYMPLLEETKNIPSQKYVSGEELRTHAERIAEKWKLGARTLFRTTVSDLTWDDNKMQWIATASFSSNEKKQGSCTYTINADFAILANGTLSKPKVPDLPGIDDYTGRIFHTARWDYDYTGGSPAIPAMDRLRTKKVGVIGTGSTAVQVIPQLARWAGELTVFQRTPGAVGLQENRETDHAWWRDNVQLAGPEWQRKRCENFNAFITNPYRASLEEEDLVKDGWTKHPSFSVALGGARNLQADFLDLAKKIDKERREIGQQHINSTVRNPATAEALFNPTYGWCKRPCFHQGYFETYNRENVRLVSTPGQGITKFTINGIMWGDKEFELDLIVLATGYDLGSLCPANRARLSIHGRGGLSMSQKWASGPATLHGVMTRGFPNLFFPGTSQAGVTANQSYMFDRAAEHIAYIIQNARPRTAASAVNLKVLVEPSLEAEELWAMETVSRARAFAATKTCSAGSYTISARLGESVDESQMARHMPWGEGMASYVKILEEWRKKGDMDGLEVVYD.

The disordered stretch occupies residues 1 to 68 (MAIGPKPESI…DSTTNVPYSL (68 aa)). Residues 49-68 (WLTSTDQPQPDSTTNVPYSL) are compositionally biased toward polar residues. FAD contacts are provided by residues 115-118 (TWYW), 127-128 (DI), and Y133. 125–127 (MCD) contributes to the NADP(+) binding site. Residues 272–278 (TGSTAVQ) and 295–296 (RT) contribute to the NADP(+) site.

The protein belongs to the FAD-binding monooxygenase family. FAD is required as a cofactor.

The enzyme catalyses protoaustinoid A + AH2 + O2 = berkeleyone A + A + H2O. It functions in the pathway secondary metabolite biosynthesis; terpenoid biosynthesis. Its function is as follows. FAD-binding monooxygenase; part of the gene cluster A that mediates the biosynthesis of the fungal meroterpenoid acetoxydehydroaustin. The first step of the pathway is the synthesis of 3,5-dimethylorsellinic acid by the polyketide synthase ausA. 3,5-dimethylorsellinic acid is then prenylated by the polyprenyl transferase ausN. Further epoxidation by the FAD-dependent monooxygenase ausM and cyclization by the probable terpene cyclase ausL lead to the formation of protoaustinoid A. Protoaustinoid A is then oxidized to spiro-lactone preaustinoid A3 by the combined action of the FAD-binding monooxygenases ausB and ausC, and the dioxygenase ausE. Acid-catalyzed keto-rearrangement and ring contraction of the tetraketide portion of preaustinoid A3 by ausJ lead to the formation of preaustinoid A4. The aldo-keto reductase ausK, with the help of ausH, is involved in the next step by transforming preaustinoid A4 into isoaustinone which is in turn hydroxylated by the P450 monooxygenase ausI to form austinolide. The cytochrome P450 monooxygenase ausG then modifies austinolide to austinol. Austinol is further acetylated to austin by the O-acetyltransferase ausP, which spontaneously changes to dehydroaustin. The cytochrome P450 monooxygenase then converts dehydroaustin is into 7-dehydrodehydroaustin. The hydroxylation catalyzed by ausR permits the second O-acetyltransferase ausQ to add an additional acetyl group to the molecule, leading to the formation of acetoxydehydroaustin. Due to genetic rearrangements of the clusters and the subsequent loss of some enzymes, the end product of the Penicillium brasilianum austinoid biosynthesis clusters is acetoxydehydroaustin. In Penicillium brasilianum, this protein is FAD-binding monooxygenase ausB.